The chain runs to 305 residues: Chromatin modification-related protein png2 (305 aa).

Residues 135–239 (TVTPQTSERR…PLVKHDTLDS (105 aa)) form a disordered region. Residues 153 to 167 (NQHSQQYSSQERSSS) are compositionally biased toward low complexity. 2 stretches are compositionally biased toward polar residues: residues 168–183 (YNNF…SYHT) and 195–210 (KSSS…APQS). Tyrosine 181 carries the post-translational modification Phosphotyrosine. Residue threonine 183 is modified to Phosphothreonine. Phosphoserine is present on residues serine 197 and serine 198. A compositionally biased stretch (basic and acidic residues) spans 211 to 223 (TERRPVRRSESRL). The segment at 248–297 (QLYCYCQQVSYGQMIGCDNENCKREWFHLPCVGLVEPPKGIWYCKECEEL) adopts a PHD-type zinc-finger fold. Residues cysteine 251, cysteine 253, cysteine 264, cysteine 269, histidine 275, cysteine 278, cysteine 291, and cysteine 294 each contribute to the Zn(2+) site.

The protein belongs to the ING family. As to quaternary structure, interacts with H3K4me3 and to a lesser extent with H3K4me2. Component of the clr6 histone deacetylase complex I'composed of at least clr6, png2, prw1, pst1 and sds3.

It localises to the cytoplasm. It is found in the nucleus. In terms of biological role, component of the clr6 histone deacetylase complex I' responsible for the deacetylation of lysine residues on the N-terminal part of the core histones (H2A, H2B, H3 and H4). Histone deacetylation gives a tag for epigenetic repression and plays an important role in transcriptional regulation, cell cycle progression and developmental events. Has a role in silencing of mating type genes. In Schizosaccharomyces pombe (strain 972 / ATCC 24843) (Fission yeast), this protein is Chromatin modification-related protein png2 (png2).